The following is a 286-amino-acid chain: Ribosome maturation factor RimP (286 aa).

Residues 200–224 are compositionally biased toward acidic residues; it reads LDGEDGDDTGVDAGDPDQDDADDAL. The segment at 200–286 is disordered; sequence LDGEDGDDTG…ANASTVKETH (87 aa). The segment covering 248 to 267 has biased composition (basic residues); it reads VGRKAKGKKASPKKSNAKKK. A compositionally biased stretch (polar residues) spans 273–286; the sequence is AASSANASTVKETH.

This sequence belongs to the RimP family.

It is found in the cytoplasm. Required for maturation of 30S ribosomal subunits. The sequence is that of Ribosome maturation factor RimP from Xanthobacter autotrophicus (strain ATCC BAA-1158 / Py2).